A 639-amino-acid chain; its full sequence is Protein phosphatase EYA4 (639 aa).

M1 bears the N-acetylmethionine mark. 3 disordered regions span residues 1 to 72 (MEDS…GGEN), 210 to 232 (QTQS…PQPG), and 300 to 368 (ADGT…DSDL). K14 participates in a covalent cross-link: Glycyl lysine isopeptide (Lys-Gly) (interchain with G-Cter in SUMO2). Residues 18-30 (ESDVSQSQNSRSM) are compositionally biased toward polar residues. Residue K52 forms a Glycyl lysine isopeptide (Lys-Gly) (interchain with G-Cter in SUMO2) linkage. Low complexity predominate over residues 56 to 66 (SNLSSTSVTTN). The span at 300–334 (ADGTPSSTSTYQLQESLPGLTNQPGEFDTMQSPST) shows a compositional bias: polar residues. Residue S361 is modified to Phosphoserine. D375 functions as the Nucleophile in the catalytic mechanism. Positions 375, 377, and 603 each coordinate Mg(2+). The active-site Proton donor is the D377.

This sequence belongs to the HAD-like hydrolase superfamily. EYA family. As to quaternary structure, interacts with SIX3; translocates EYA4 from the cytoplasm to the nucleus and promotes activation of their target genes. It depends on Mg(2+) as a cofactor. Highly expressed in heart and skeletal muscle.

The protein resides in the cytoplasm. The protein localises to the nucleus. The catalysed reaction is O-phospho-L-tyrosyl-[protein] + H2O = L-tyrosyl-[protein] + phosphate. Its function is as follows. Tyrosine phosphatase that specifically dephosphorylates 'Tyr-142' of histone H2AX (H2AXY142ph). 'Tyr-142' phosphorylation of histone H2AX plays a central role in DNA repair and acts as a mark that distinguishes between apoptotic and repair responses to genotoxic stress. Promotes efficient DNA repair by dephosphorylating H2AX, promoting the recruitment of DNA repair complexes containing MDC1. Its function as histone phosphatase probably explains its role in transcription regulation during organogenesis. May be involved in development of the eye. In Homo sapiens (Human), this protein is Protein phosphatase EYA4 (EYA4).